Consider the following 176-residue polypeptide: Glutathione-regulated potassium-efflux system ancillary protein KefF (176 aa).

Residues His8, 14 to 17 (SHAN), 65 to 68 (MQWY), and 105 to 108 (TTGG) contribute to the FMN site.

The protein belongs to the NAD(P)H dehydrogenase (quinone) family. KefF subfamily. Homodimer. Interacts with KefC. It depends on FMN as a cofactor.

The protein resides in the cell inner membrane. It carries out the reaction a quinone + NADH + H(+) = a quinol + NAD(+). It catalyses the reaction a quinone + NADPH + H(+) = a quinol + NADP(+). Its function is as follows. Regulatory subunit of a potassium efflux system that confers protection against electrophiles. Required for full activity of KefC. Shows redox enzymatic activity, but this enzymatic activity is not required for activation of KefC. In Salmonella dublin (strain CT_02021853), this protein is Glutathione-regulated potassium-efflux system ancillary protein KefF.